A 632-amino-acid polypeptide reads, in one-letter code: tRNA uridine 5-carboxymethylaminomethyl modification enzyme MnmG (632 aa).

Residues 13–18 (GGGHAG), Val-125, and Ser-180 each bind FAD. 273-287 (GPRYCPSIEDKVVRF) serves as a coordination point for NAD(+). FAD is bound at residue Gln-370.

Belongs to the MnmG family. In terms of assembly, homodimer. Heterotetramer of two MnmE and two MnmG subunits. The cofactor is FAD.

It is found in the cytoplasm. Its function is as follows. NAD-binding protein involved in the addition of a carboxymethylaminomethyl (cmnm) group at the wobble position (U34) of certain tRNAs, forming tRNA-cmnm(5)s(2)U34. This is tRNA uridine 5-carboxymethylaminomethyl modification enzyme MnmG from Nitrosospira multiformis (strain ATCC 25196 / NCIMB 11849 / C 71).